The primary structure comprises 449 residues: Tubulin beta chain (449 aa).

Residues Gln11, Glu69, Ser138, Gly142, Thr143, Gly144, Asn204, and Asn226 each coordinate GTP. Glu69 lines the Mg(2+) pocket. Residues Gln426–Ala449 form a disordered region. A compositionally biased stretch (acidic residues) spans Thr429–Ala449.

It belongs to the tubulin family. As to quaternary structure, dimer of alpha and beta chains. A typical microtubule is a hollow water-filled tube with an outer diameter of 25 nm and an inner diameter of 15 nM. Alpha-beta heterodimers associate head-to-tail to form protofilaments running lengthwise along the microtubule wall with the beta-tubulin subunit facing the microtubule plus end conferring a structural polarity. Microtubules usually have 13 protofilaments but different protofilament numbers can be found in some organisms and specialized cells. Requires Mg(2+) as cofactor.

Its subcellular location is the cytoplasm. It is found in the cytoskeleton. Functionally, tubulin is the major constituent of microtubules, a cylinder consisting of laterally associated linear protofilaments composed of alpha- and beta-tubulin heterodimers. Microtubules grow by the addition of GTP-tubulin dimers to the microtubule end, where a stabilizing cap forms. Below the cap, tubulin dimers are in GDP-bound state, owing to GTPase activity of alpha-tubulin. This is Tubulin beta chain from Toxoplasma gondii.